The chain runs to 163 residues: Shikimate kinase (163 aa).

10–15 (GVGKTT) serves as a coordination point for ATP. Thr-14 is a Mg(2+) binding site. Substrate is bound by residues Asp-28, Arg-52, and Gly-75. Arg-116 lines the ATP pocket. A substrate-binding site is contributed by Arg-134. Arg-151 is a binding site for ATP.

This sequence belongs to the shikimate kinase family. As to quaternary structure, monomer. The cofactor is Mg(2+).

Its subcellular location is the cytoplasm. It catalyses the reaction shikimate + ATP = 3-phosphoshikimate + ADP + H(+). Its pathway is metabolic intermediate biosynthesis; chorismate biosynthesis; chorismate from D-erythrose 4-phosphate and phosphoenolpyruvate: step 5/7. In terms of biological role, catalyzes the specific phosphorylation of the 3-hydroxyl group of shikimic acid using ATP as a cosubstrate. The chain is Shikimate kinase from Streptococcus pyogenes serotype M49 (strain NZ131).